The following is a 318-amino-acid chain: L-lactate dehydrogenase (318 aa).

Residues V17, D38, K43, Y69, and G83–A84 each bind NAD(+). Q86 and R92 together coordinate substrate. NAD(+) contacts are provided by residues S105, A122–N124, and S147. N124 to D127 provides a ligand contact to substrate. Residue D152–R155 participates in substrate binding. K157 and H172 together coordinate beta-D-fructose 1,6-bisphosphate. The active-site Proton acceptor is the H179. Y223 is subject to Phosphotyrosine. Substrate is bound at residue T232.

This sequence belongs to the LDH/MDH superfamily. LDH family. In terms of assembly, homotetramer.

The protein resides in the cytoplasm. It carries out the reaction (S)-lactate + NAD(+) = pyruvate + NADH + H(+). Its pathway is fermentation; pyruvate fermentation to lactate; (S)-lactate from pyruvate: step 1/1. With respect to regulation, allosterically activated by fructose 1,6-bisphosphate (FBP). Functionally, catalyzes the conversion of lactate to pyruvate. The polypeptide is L-lactate dehydrogenase (Staphylococcus saprophyticus subsp. saprophyticus (strain ATCC 15305 / DSM 20229 / NCIMB 8711 / NCTC 7292 / S-41)).